We begin with the raw amino-acid sequence, 454 residues long: Bifunctional protein GlmU (454 aa).

Residues 1-226 (MSTTVIILAA…AFEVEGVNDR (226 aa)) form a pyrophosphorylase region. Residues 8 to 11 (LAAG), K22, Q73, 78 to 79 (GT), 100 to 102 (YGD), G137, E151, N166, and N224 each bind UDP-N-acetyl-alpha-D-glucosamine. Position 102 (D102) interacts with Mg(2+). Position 224 (N224) interacts with Mg(2+). The tract at residues 227–247 (LQLAALEREFQKQQAKELMQQ) is linker. The tract at residues 248–454 (GVTFADPARF…NYQRPQKLKK (207 aa)) is N-acetyltransferase. UDP-N-acetyl-alpha-D-glucosamine is bound by residues R330 and K348. H360 acts as the Proton acceptor in catalysis. UDP-N-acetyl-alpha-D-glucosamine contacts are provided by Y363 and N374. Acetyl-CoA-binding positions include A377, 383–384 (NY), S402, A420, and R437.

It in the N-terminal section; belongs to the N-acetylglucosamine-1-phosphate uridyltransferase family. In the C-terminal section; belongs to the transferase hexapeptide repeat family. In terms of assembly, homotrimer. Mg(2+) serves as cofactor.

It localises to the cytoplasm. It catalyses the reaction alpha-D-glucosamine 1-phosphate + acetyl-CoA = N-acetyl-alpha-D-glucosamine 1-phosphate + CoA + H(+). The enzyme catalyses N-acetyl-alpha-D-glucosamine 1-phosphate + UTP + H(+) = UDP-N-acetyl-alpha-D-glucosamine + diphosphate. It participates in nucleotide-sugar biosynthesis; UDP-N-acetyl-alpha-D-glucosamine biosynthesis; N-acetyl-alpha-D-glucosamine 1-phosphate from alpha-D-glucosamine 6-phosphate (route II): step 2/2. Its pathway is nucleotide-sugar biosynthesis; UDP-N-acetyl-alpha-D-glucosamine biosynthesis; UDP-N-acetyl-alpha-D-glucosamine from N-acetyl-alpha-D-glucosamine 1-phosphate: step 1/1. It functions in the pathway bacterial outer membrane biogenesis; LPS lipid A biosynthesis. In terms of biological role, catalyzes the last two sequential reactions in the de novo biosynthetic pathway for UDP-N-acetylglucosamine (UDP-GlcNAc). The C-terminal domain catalyzes the transfer of acetyl group from acetyl coenzyme A to glucosamine-1-phosphate (GlcN-1-P) to produce N-acetylglucosamine-1-phosphate (GlcNAc-1-P), which is converted into UDP-GlcNAc by the transfer of uridine 5-monophosphate (from uridine 5-triphosphate), a reaction catalyzed by the N-terminal domain. This is Bifunctional protein GlmU from Acinetobacter baumannii (strain AYE).